We begin with the raw amino-acid sequence, 528 residues long: ADP,ATP carrier protein 1 (528 aa).

The next 12 helical transmembrane spans lie at 24-44, 63-83, 93-113, 124-144, 149-169, 184-204, 220-240, 284-304, 327-347, 356-376, 381-401, and 463-483; these read LKKV…YTIL, IPFI…LIYA, ALFF…PVVI, AFAD…IAML, FAVF…LMFW, FYAL…PAII, WGVS…IIAA, YMLL…LVEV, FSFW…GNVI, ALVT…LVIF, TGLV…VGAI, and IGAM…VWLT.

The protein belongs to the ADP/ATP translocase tlc family.

It is found in the cell membrane. The sequence is that of ADP,ATP carrier protein 1 (tlcA) from Chlamydia trachomatis serovar D (strain ATCC VR-885 / DSM 19411 / UW-3/Cx).